A 348-amino-acid chain; its full sequence is MIILGFESSCDETGVAAVSTERGLLAHALHTQIAMHQEYGGVVPELASRDHIRRAVPLARQVLAEAGLGLQDVDAVAYTAGPGLAGALLVGASVAQAFAWARGLPAIPIHHLEGHLLSPLLDDPRPDFPFVALLVSGGHTQLMRVDGVGRYALLGETLDDAAGEAFDKSAKLMGLGYPGGPALSRLAASGDPRRYALPRPMLHSGDLDFSFSGLKTAVLTRVKEAERDGGLDDAARADLAAATQAAIVEVLVAKAVRALKQTGLKRLVVAGGVGANQLLRELLAQALRPLGARAYFPPLALCTDNGAMIAFAAAERVKAGLASLQAGQHAFTVRPRWDLADICAGTPA.

Positions 111 and 115 each coordinate Fe cation. Residues 134-138, Asp-167, Gly-180, and Asn-276 contribute to the substrate site; that span reads LVSGG. Asp-304 contacts Fe cation.

It belongs to the KAE1 / TsaD family. The cofactor is Fe(2+).

It localises to the cytoplasm. It carries out the reaction L-threonylcarbamoyladenylate + adenosine(37) in tRNA = N(6)-L-threonylcarbamoyladenosine(37) in tRNA + AMP + H(+). Required for the formation of a threonylcarbamoyl group on adenosine at position 37 (t(6)A37) in tRNAs that read codons beginning with adenine. Is involved in the transfer of the threonylcarbamoyl moiety of threonylcarbamoyl-AMP (TC-AMP) to the N6 group of A37, together with TsaE and TsaB. TsaD likely plays a direct catalytic role in this reaction. The polypeptide is tRNA N6-adenosine threonylcarbamoyltransferase (Bordetella petrii (strain ATCC BAA-461 / DSM 12804 / CCUG 43448)).